Consider the following 428-residue polypeptide: Elongation factor 1-alpha (428 aa).

The tr-type G domain maps to 5-217 (KPHVNIVFIG…DQIPEPEKPI (213 aa)). The tract at residues 14–21 (GHVDHGKS) is G1. 14-21 (GHVDHGKS) contributes to the GTP binding site. Serine 21 contributes to the Mg(2+) binding site. The tract at residues 68–72 (GITID) is G2. Positions 89-92 (DAPG) are G3. Residues 89–93 (DAPGH) and 144–147 (NKMD) each bind GTP. The segment at 144–147 (NKMD) is G4. The tract at residues 181 to 183 (SAW) is G5.

This sequence belongs to the TRAFAC class translation factor GTPase superfamily. Classic translation factor GTPase family. EF-Tu/EF-1A subfamily.

It localises to the cytoplasm. It carries out the reaction GTP + H2O = GDP + phosphate + H(+). In terms of biological role, GTP hydrolase that promotes the GTP-dependent binding of aminoacyl-tRNA to the A-site of ribosomes during protein biosynthesis. This chain is Elongation factor 1-alpha, found in Pyrococcus horikoshii (strain ATCC 700860 / DSM 12428 / JCM 9974 / NBRC 100139 / OT-3).